The following is a 374-amino-acid chain: U-box domain-containing protein 8 (374 aa).

In terms of domain architecture, U-box spans 4–79 (DLPNDFRCPI…LNFAHVSLKE (76 aa)). ARM repeat units lie at residues 126-165 (SSIR…NLSL), 167-206 (DDNK…SLAV), 208-248 (EVNK…ALCS), 250-288 (PDNR…KCRG), and 289-327 (GREE…CLCC).

In terms of tissue distribution, expressed in the whole plant.

It catalyses the reaction S-ubiquitinyl-[E2 ubiquitin-conjugating enzyme]-L-cysteine + [acceptor protein]-L-lysine = [E2 ubiquitin-conjugating enzyme]-L-cysteine + N(6)-ubiquitinyl-[acceptor protein]-L-lysine.. It participates in protein modification; protein ubiquitination. Functionally, functions as an E3 ubiquitin ligase. Involved in the age-dependent pseudo-self-compatibility process. This Arabidopsis thaliana (Mouse-ear cress) protein is U-box domain-containing protein 8 (PUB8).